We begin with the raw amino-acid sequence, 181 residues long: Translation initiation factor IF-3 (181 aa).

It belongs to the IF-3 family. Monomer.

Its subcellular location is the cytoplasm. In terms of biological role, IF-3 binds to the 30S ribosomal subunit and shifts the equilibrium between 70S ribosomes and their 50S and 30S subunits in favor of the free subunits, thus enhancing the availability of 30S subunits on which protein synthesis initiation begins. The sequence is that of Translation initiation factor IF-3 from Azotobacter vinelandii.